The sequence spans 205 residues: GTP cyclohydrolase-2 (205 aa).

49–53 serves as a coordination point for GTP; sequence RIHSE. 3 residues coordinate Zn(2+): Cys54, Cys65, and Cys67. Residues Gln70, 92-94, and Thr114 contribute to the GTP site; that span reads EGR. Asp126 (proton acceptor) is an active-site residue. Arg128 serves as the catalytic Nucleophile. GTP is bound by residues Thr149 and Lys154.

The protein belongs to the GTP cyclohydrolase II family. The cofactor is Zn(2+).

The catalysed reaction is GTP + 4 H2O = 2,5-diamino-6-hydroxy-4-(5-phosphoribosylamino)-pyrimidine + formate + 2 phosphate + 3 H(+). It functions in the pathway cofactor biosynthesis; riboflavin biosynthesis; 5-amino-6-(D-ribitylamino)uracil from GTP: step 1/4. Catalyzes the conversion of GTP to 2,5-diamino-6-ribosylamino-4(3H)-pyrimidinone 5'-phosphate (DARP), formate and pyrophosphate. The polypeptide is GTP cyclohydrolase-2 (Shewanella amazonensis (strain ATCC BAA-1098 / SB2B)).